The chain runs to 55 residues: Large ribosomal subunit protein bL33 (55 aa).

This sequence belongs to the bacterial ribosomal protein bL33 family.

This is Large ribosomal subunit protein bL33 from Gluconacetobacter diazotrophicus (strain ATCC 49037 / DSM 5601 / CCUG 37298 / CIP 103539 / LMG 7603 / PAl5).